A 21-amino-acid chain; its full sequence is GIWDTIKSMGKVFAGKILQNL.

Leucine 21 is modified (leucine amide).

As to expression, expressed by the skin glands.

It is found in the secreted. Antimicrobial peptide with activity against Gram-negative and Gram-positive bacteria (MIC=13 uM against E.coli, MIC=25 uM against S.aureus) and fungi (MIC=25 uM against C.albicans). Also shows hemolytic activity (HC(50)=50 uM). In vitro, shows moderate inhibitory activity against HIV. The protein is Brevinin-2-related peptide of Lithobates septentrionalis (Mink frog).